A 249-amino-acid chain; its full sequence is 1-(5-phosphoribosyl)-5-[(5-phosphoribosylamino)methylideneamino] imidazole-4-carboxamide isomerase (249 aa).

Asp11 serves as the catalytic Proton acceptor. Asp132 functions as the Proton donor in the catalytic mechanism.

The protein belongs to the HisA/HisF family.

The protein resides in the cytoplasm. The enzyme catalyses 1-(5-phospho-beta-D-ribosyl)-5-[(5-phospho-beta-D-ribosylamino)methylideneamino]imidazole-4-carboxamide = 5-[(5-phospho-1-deoxy-D-ribulos-1-ylimino)methylamino]-1-(5-phospho-beta-D-ribosyl)imidazole-4-carboxamide. Its pathway is amino-acid biosynthesis; L-histidine biosynthesis; L-histidine from 5-phospho-alpha-D-ribose 1-diphosphate: step 4/9. This chain is 1-(5-phosphoribosyl)-5-[(5-phosphoribosylamino)methylideneamino] imidazole-4-carboxamide isomerase, found in Nitrobacter winogradskyi (strain ATCC 25391 / DSM 10237 / CIP 104748 / NCIMB 11846 / Nb-255).